The sequence spans 372 residues: GDSL esterase/lipase At1g54020 (372 aa).

Residues 1 to 26 (MECSSVSVLGILLVFPLLHNLVTISG) form the signal peptide. The active-site Nucleophile is the Ser40. 2 N-linked (GlcNAc...) asparagine glycosylation sites follow: Asn161 and Asn280. Residues Asp314 and His317 contribute to the active site.

Belongs to the 'GDSL' lipolytic enzyme family.

Its subcellular location is the secreted. The chain is GDSL esterase/lipase At1g54020 from Arabidopsis thaliana (Mouse-ear cress).